A 119-amino-acid chain; its full sequence is Large ribosomal subunit protein bL20 (119 aa).

This sequence belongs to the bacterial ribosomal protein bL20 family.

Functionally, binds directly to 23S ribosomal RNA and is necessary for the in vitro assembly process of the 50S ribosomal subunit. It is not involved in the protein synthesizing functions of that subunit. This is Large ribosomal subunit protein bL20 from Clostridium botulinum (strain ATCC 19397 / Type A).